The following is a 296-amino-acid chain: Ribonuclease H2 subunit A (296 aa).

The RNase H type-2 domain occupies 14–236 (PCLMGIDEAG…CTTHLKGEVE (223 aa)). The a divalent metal cation site is built by Asp20, Glu21, and Asp127.

The protein belongs to the RNase HII family. Eukaryotic subfamily. Mn(2+) is required as a cofactor. The cofactor is Mg(2+).

The enzyme catalyses Endonucleolytic cleavage to 5'-phosphomonoester.. Catalytic subunit of RNase HII, an endonuclease that specifically degrades the RNA of RNA:DNA hybrids. Participates in DNA replication, possibly by mediating the removal of lagging-strand Okazaki fragment RNA primers during DNA replication. Mediates the excision of single ribonucleotides from DNA:RNA duplexes. This Arabidopsis thaliana (Mouse-ear cress) protein is Ribonuclease H2 subunit A.